The sequence spans 504 residues: Activin receptor type-1-like (504 aa).

The N-terminal stretch at 1–20 is a signal peptide; the sequence is MTLGIFRRVFLMLSVALGLT. Topologically, residues 21-121 are extracellular; the sequence is KGDLVKPSRG…EEPEVDAHLP (101 aa). N34 carries N-linked (GlcNAc...) asparagine glycosylation. Disulfide bonds link C35-C52, C37-C42, and C47-C70. The interval 74–77 is mediates specificity for BMP ligand; the sequence is NQEL. 2 disulfides stabilise this stretch: C78/C90 and C91/C96. The N-linked (GlcNAc...) asparagine glycan is linked to N99. A helical membrane pass occupies residues 122 to 142; it reads LILGPVLALLVLVALGTLGLW. The Cytoplasmic portion of the chain corresponds to 143-504; it reads RVRRRQEKQR…QNPEKPKVIH (362 aa). Residues S156, S161, and S162 each carry the phosphoserine modification. One can recognise a GS domain in the interval 173 to 202; that stretch reads SMLGDFLVSDCTTGSGSGLPFLVQRTVARQ. The 302-residue stretch at 203–504 folds into the Protein kinase domain; the sequence is VALVECVGKG…QNPEKPKVIH (302 aa). ATP contacts are provided by residues 209–217 and K230; that span reads VGKGRYGEV. Catalysis depends on D331, which acts as the Proton acceptor.

This sequence belongs to the protein kinase superfamily. TKL Ser/Thr protein kinase family. TGFB receptor subfamily. Interacts with TSC22D1/TSC-22. Mg(2+) is required as a cofactor. Mn(2+) serves as cofactor. Urogenital ridge, testis, ovary, brain and lung. In lung, found exclusively in pulmonary vessels of all sizes. Also expressed in aorta, vena cava and certain blood vessels of kidney, spleen, heart and intestine. For most blood vessels, a higher level of expression is found in endothelium than in adjacent smooth muscle.

It localises to the cell membrane. It carries out the reaction L-threonyl-[receptor-protein] + ATP = O-phospho-L-threonyl-[receptor-protein] + ADP + H(+). The catalysed reaction is L-seryl-[receptor-protein] + ATP = O-phospho-L-seryl-[receptor-protein] + ADP + H(+). Its function is as follows. Type I receptor for TGF-beta family ligands BMP9/GDF2 and BMP10 and important regulator of normal blood vessel development. On ligand binding, forms a receptor complex consisting of two type II and two type I transmembrane serine/threonine kinases. Type II receptors phosphorylate and activate type I receptors which autophosphorylate, then bind and activate SMAD transcriptional regulators. May bind activin as well. This is Activin receptor type-1-like (Acvrl1) from Rattus norvegicus (Rat).